The primary structure comprises 248 residues: Large ribosomal subunit protein uL10m (248 aa).

Residues 1–24 (MATLIQRSLSLAKSSTPALQFLRF) constitute a mitochondrion transit peptide.

The protein belongs to the universal ribosomal protein uL10 family. Component of the mitochondrial ribosome large subunit (39S) which comprises a 16S rRNA and about 50 distinct proteins.

The protein resides in the mitochondrion. The chain is Large ribosomal subunit protein uL10m (mRpL10) from Drosophila melanogaster (Fruit fly).